The chain runs to 899 residues: Translation initiation factor IF-2 (899 aa).

2 disordered regions span residues 31–227 and 240–310; these read KKAE…ATEQ and VTTS…GFDK. 2 stretches are compositionally biased toward polar residues: residues 36–47 and 73–87; these read NVSQTEKQSLLS and STLSVAGTGGKSKSV. Composition is skewed to basic and acidic residues over residues 101-173, 181-219, and 247-261; these read SALE…EKAK, AKSETELLQLRREEEAKRKAEEDSQRQLEEARKMAETNE, and RAAEDEQDRKEETTG. Residues 296-308 show a composition bias toward polar residues; that stretch reads PQVNAPTSMQQGF. The tr-type G domain occupies 398–565; it reads SRAPVVTIMG…AILLQSEILE (168 aa). The segment at 407–414 is G1; sequence GHVDHGKT. 407–414 serves as a coordination point for GTP; it reads GHVDHGKT. A G2 region spans residues 432–436; it reads GITQH. The interval 453 to 456 is G3; it reads DTPG. GTP-binding positions include 453-457 and 507-510; these read DTPGH and NKID. Residues 507–510 form a G4 region; it reads NKID. Positions 543–545 are G5; that stretch reads SAK.

This sequence belongs to the TRAFAC class translation factor GTPase superfamily. Classic translation factor GTPase family. IF-2 subfamily.

It is found in the cytoplasm. Functionally, one of the essential components for the initiation of protein synthesis. Protects formylmethionyl-tRNA from spontaneous hydrolysis and promotes its binding to the 30S ribosomal subunits. Also involved in the hydrolysis of GTP during the formation of the 70S ribosomal complex. The chain is Translation initiation factor IF-2 from Photobacterium profundum (strain SS9).